Reading from the N-terminus, the 239-residue chain is Serine protease SplF (239 aa).

A signal peptide spans 1–36 (MNKNIIIKSIAALTILTSITGVGTTMVEGIQQTAKA). Active-site charge relay system residues include His-75, Asp-114, and Ser-192.

The protein belongs to the peptidase S1B family.

Its subcellular location is the secreted. The chain is Serine protease SplF (splF) from Staphylococcus aureus (strain NCTC 8325 / PS 47).